Consider the following 337-residue polypeptide: Cytoskeleton protein RodZ (337 aa).

Residues 1–111 (MNTEATHDQN…LGKRRKKRDG (111 aa)) are Cytoplasmic-facing. Residues 19 to 71 (LRNAREQLGLSQQAVAERLCLKVSTVRDIEEDKAPADLASTFLRGYIRSYARL) enclose the HTH cro/C1-type domain. A DNA-binding region (H-T-H motif) is located at residues 30-49 (QQAVAERLCLKVSTVRDIEE). Residues 112–132 (WLMTFTWLVLFVVIGLSGAWW) form a helical; Signal-anchor for type II membrane protein membrane-spanning segment. Topologically, residues 133 to 337 (WQDHKAQQEE…TLNAEQSPAQ (205 aa)) are periplasmic. Residues 145 to 167 (TMADQSSAELSSNSEQGQSVPLN) are compositionally biased toward polar residues. The segment at 145–236 (TMADQSSAEL…TAATTPDGAA (92 aa)) is disordered. Over residues 168–207 (TSTTTDPATTSTPPASVDTTATNTQTPAVTAPAPAVDPQQ) the composition is skewed to low complexity. Positions 208-218 (NAVVSPSQANV) are enriched in polar residues. A compositionally biased stretch (low complexity) spans 219–236 (DTAATPAPTAATTPDGAA).

Belongs to the RodZ family.

It is found in the cell inner membrane. Functionally, cytoskeletal protein that is involved in cell-shape control through regulation of the length of the long axis. The sequence is that of Cytoskeleton protein RodZ from Escherichia coli O9:H4 (strain HS).